A 96-amino-acid chain; its full sequence is DNA/RNA-binding protein Alba (96 aa).

It belongs to the histone-like Alba family.

It is found in the cytoplasm. Its subcellular location is the chromosome. Functionally, binds double-stranded DNA tightly but without sequence specificity. Involved in DNA compaction. This Methanocella arvoryzae (strain DSM 22066 / NBRC 105507 / MRE50) protein is DNA/RNA-binding protein Alba.